Consider the following 206-residue polypeptide: 2,3-bisphosphoglycerate-dependent phosphoglycerate mutase (206 aa).

Substrate contacts are provided by residues 9 to 16 (RHGQSEWN), 22 to 23 (TG), arginine 61, 88 to 91 (ERDY), lysine 99, 115 to 116 (RR), and 159 to 160 (GN). Histidine 10 functions as the Tele-phosphohistidine intermediate in the catalytic mechanism. Catalysis depends on glutamate 88, which acts as the Proton donor/acceptor.

It belongs to the phosphoglycerate mutase family. BPG-dependent PGAM subfamily. Homodimer.

The enzyme catalyses (2R)-2-phosphoglycerate = (2R)-3-phosphoglycerate. Its pathway is carbohydrate degradation; glycolysis; pyruvate from D-glyceraldehyde 3-phosphate: step 3/5. In terms of biological role, catalyzes the interconversion of 2-phosphoglycerate and 3-phosphoglycerate. In Brucella melitensis biotype 2 (strain ATCC 23457), this protein is 2,3-bisphosphoglycerate-dependent phosphoglycerate mutase.